The chain runs to 551 residues: Glucose-6-phosphate isomerase 2 (551 aa).

Glu-353 functions as the Proton donor in the catalytic mechanism. Residues His-384 and Lys-512 contribute to the active site.

The protein belongs to the GPI family.

The protein localises to the cytoplasm. The enzyme catalyses alpha-D-glucose 6-phosphate = beta-D-fructose 6-phosphate. It functions in the pathway carbohydrate biosynthesis; gluconeogenesis. It participates in carbohydrate degradation; glycolysis; D-glyceraldehyde 3-phosphate and glycerone phosphate from D-glucose: step 2/4. Functionally, catalyzes the reversible isomerization of glucose-6-phosphate to fructose-6-phosphate. This Colwellia psychrerythraea (strain 34H / ATCC BAA-681) (Vibrio psychroerythus) protein is Glucose-6-phosphate isomerase 2.